The following is a 471-amino-acid chain: Glutamate--tRNA ligase (471 aa).

Positions 9 to 19 (PSPTGYLHVGG) match the 'HIGH' region motif. Zn(2+) is bound by residues cysteine 98, cysteine 100, cysteine 125, and histidine 127. The 'KMSKS' region motif lies at 237–241 (KLSKR). An ATP-binding site is contributed by lysine 240.

Belongs to the class-I aminoacyl-tRNA synthetase family. Glutamate--tRNA ligase type 1 subfamily. As to quaternary structure, monomer. Zn(2+) serves as cofactor.

Its subcellular location is the cytoplasm. The catalysed reaction is tRNA(Glu) + L-glutamate + ATP = L-glutamyl-tRNA(Glu) + AMP + diphosphate. Its function is as follows. Catalyzes the attachment of glutamate to tRNA(Glu) in a two-step reaction: glutamate is first activated by ATP to form Glu-AMP and then transferred to the acceptor end of tRNA(Glu). This Salmonella arizonae (strain ATCC BAA-731 / CDC346-86 / RSK2980) protein is Glutamate--tRNA ligase.